The following is a 787-amino-acid chain: Zinc finger protein 227 (787 aa).

The 72-residue stretch at 23–94 (VTFKDVAVVF…ERETQRNGHS (72 aa)) folds into the KRAB domain. 18 consecutive C2H2-type zinc fingers follow at residues 243 to 275 (HPCRVCGEGFSHGAVLPVHQVDPGEKCSHLQTH), 312 to 334 (YRCDSCGKAFGSSTGLIIHYRTH), 340 to 362 (YRCEACGKCFSQSSNFQCHQRVH), 368 to 390 (YKCEECGKGFGWSVNLRVHQRVH), 396 to 418 (YKCEECGKGFTQAAHYHIHQRVH), 424 to 446 (YKCDVCGKGFSHNSPLICHRRVH), 452 to 474 (YRCEACGKGFTRNTDLHIHFRVH), 480 to 502 (YTCKECGKGFSQASNLQVHQNVH), 508 to 530 (FKCETCGKGFSQSSKLQTHQRVH), 536 to 558 (YRCDVCGKDFSYSSNLKLHQVIH), 564 to 586 (YTCEACGKGFSWRSNLHAHQRVH), 592 to 614 (YKCEACDKSFSQAIDFRVHQRVH), 620 to 642 (YKCGVCGKGFSQSSGLQSHQRVH), 648 to 670 (YKCDVCGKGFRYSSQFIYHQRGH), 676 to 698 (YKCEECGKGFGRSLNLRHHQRVH), 704 to 726 (HKCEECGKAFSLPSNLRVHLSVH), 732 to 754 (FKCEDCGKGFSQSSRLQAHQRVH), and 760 to 782 (YKCNICGKDFSHRSRLTYHQKVH).

It belongs to the krueppel C2H2-type zinc-finger protein family.

It localises to the nucleus. Functionally, may be involved in transcriptional regulation. This chain is Zinc finger protein 227 (ZNF227), found in Bos taurus (Bovine).